We begin with the raw amino-acid sequence, 705 residues long: Kinesin-like protein KIF2A (705 aa).

Residues 1-216 (MATANFGKIQ…LDYRPLTTAD (216 aa)) form a globular region. Residues 65 to 186 (DLVPDEDIEP…QELREKRAQD (122 aa)) are disordered. S75 carries the phosphoserine modification. At T96 the chain carries Phosphothreonine. K101 carries the N6-acetyllysine modification. Polar residues predominate over residues 122 to 139 (LPEQSSSAQQNGSVSDIS). Residues S134 and S139 each carry the phosphoserine modification. Over residues 158–186 (CVKEVEKLQEKREKRRLQQQELREKRAQD) the composition is skewed to basic and acidic residues. The 331-residue stretch at 222 to 552 (RICVCVRKRP…LRYANRVKEL (331 aa)) folds into the Kinesin motor domain. Position 312–319 (312–319 (GQTGSGKT)) interacts with ATP. T528 and Y545 each carry phosphoserine. The stretch at 659–698 (ATQLEAILEQKIDILTELRDKVKSFRAALQEEEQASKQIN) forms a coiled coil.

The protein belongs to the TRAFAC class myosin-kinesin ATPase superfamily. Kinesin family. MCAK/KIF2 subfamily. As to quaternary structure, interacts with AURKA and PLK1. Interacts with PSRC1. Interacts with MCRS1; the interaction enhances recruitment of KIF2A to the minus ends of spindle microtubules which promotes chromosome alignment. In terms of tissue distribution, highest level in lung. High level in ovary, moderate levels in heart, kidney, placenta, skeletal muscle and spleen (at protein level). Pancreas and spleen express a shorter isoform (at protein level). Expressed in the flagellum of elongated spermatids and sperm in the testis lumen (at protein level). Isoform 1 expressed in neuronal cells. Isoform 2 expressed in astrocytes and fibroblasts.

It is found in the cytoplasm. Its subcellular location is the cytoskeleton. The protein localises to the microtubule organizing center. The protein resides in the centrosome. It localises to the spindle pole. It is found in the spindle. Its subcellular location is the lysosome. In terms of biological role, plus end-directed microtubule-dependent motor required for normal brain development. May regulate microtubule dynamics during axonal growth. Required for normal progression through mitosis. Required for normal congress of chromosomes at the metaphase plate. Required for normal spindle dynamics during mitosis. Promotes spindle turnover. Implicated in formation of bipolar mitotic spindles. Has microtubule depolymerization activity. This chain is Kinesin-like protein KIF2A (Kif2a), found in Mus musculus (Mouse).